Reading from the N-terminus, the 154-residue chain is Myoglobin (154 aa).

The Globin domain occupies 2-148 (GLSDGEWQLV…FRNDIAAKYK (147 aa)). Ser-4 carries the phosphoserine modification. His-65 contacts nitrite. His-65 contributes to the O2 binding site. A Phosphothreonine modification is found at Thr-68. A heme b-binding site is contributed by His-94.

This sequence belongs to the globin family. As to quaternary structure, monomeric.

It is found in the cytoplasm. Its subcellular location is the sarcoplasm. It carries out the reaction Fe(III)-heme b-[protein] + nitric oxide + H2O = Fe(II)-heme b-[protein] + nitrite + 2 H(+). The catalysed reaction is H2O2 + AH2 = A + 2 H2O. In terms of biological role, monomeric heme protein which primary function is to store oxygen and facilitate its diffusion within muscle tissues. Reversibly binds oxygen through a pentacoordinated heme iron and enables its timely and efficient release as needed during periods of heightened demand. Depending on the oxidative conditions of tissues and cells, and in addition to its ability to bind oxygen, it also has a nitrite reductase activity whereby it regulates the production of bioactive nitric oxide. Under stress conditions, like hypoxia and anoxia, it also protects cells against reactive oxygen species thanks to its pseudoperoxidase activity. The sequence is that of Myoglobin (MB) from Ondatra zibethicus (Muskrat).